The chain runs to 205 residues: Adenylyl-sulfate kinase (205 aa).

Residue glycine 31–serine 38 participates in ATP binding. The active-site Phosphoserine intermediate is serine 105.

This sequence belongs to the APS kinase family.

The catalysed reaction is adenosine 5'-phosphosulfate + ATP = 3'-phosphoadenylyl sulfate + ADP + H(+). It participates in sulfur metabolism; hydrogen sulfide biosynthesis; sulfite from sulfate: step 2/3. In terms of biological role, catalyzes the synthesis of activated sulfate. This is Adenylyl-sulfate kinase from Shewanella baltica (strain OS223).